Reading from the N-terminus, the 160-residue chain is Phosphopantetheine adenylyltransferase (160 aa).

T9 is a substrate binding site. ATP contacts are provided by residues 9–10 (TF) and H17. 3 residues coordinate substrate: K41, L73, and R87. ATP contacts are provided by residues 88 to 90 (GLR), E98, and 123 to 129 (LSYISST).

It belongs to the bacterial CoaD family. As to quaternary structure, homohexamer. Requires Mg(2+) as cofactor.

It localises to the cytoplasm. It catalyses the reaction (R)-4'-phosphopantetheine + ATP + H(+) = 3'-dephospho-CoA + diphosphate. Its pathway is cofactor biosynthesis; coenzyme A biosynthesis; CoA from (R)-pantothenate: step 4/5. Its function is as follows. Reversibly transfers an adenylyl group from ATP to 4'-phosphopantetheine, yielding dephospho-CoA (dPCoA) and pyrophosphate. The sequence is that of Phosphopantetheine adenylyltransferase from Marinobacter nauticus (strain ATCC 700491 / DSM 11845 / VT8) (Marinobacter aquaeolei).